The primary structure comprises 119 residues: uncharacterized protein (119 aa).

This is an uncharacterized protein from Methanocaldococcus jannaschii (strain ATCC 43067 / DSM 2661 / JAL-1 / JCM 10045 / NBRC 100440) (Methanococcus jannaschii).